Consider the following 373-residue polypeptide: Dual-specificity RNA methyltransferase RlmN (373 aa).

Catalysis depends on Glu94, which acts as the Proton acceptor. Positions Glu100–Asp339 constitute a Radical SAM core domain. Cys107 and Cys344 are joined by a disulfide. Residues Cys114, Cys118, and Cys121 each contribute to the [4Fe-4S] cluster site. Residues Gly168–Glu169, Ser200, Ser222–His224, and Asn301 each bind S-adenosyl-L-methionine. Catalysis depends on Cys344, which acts as the S-methylcysteine intermediate.

The protein belongs to the radical SAM superfamily. RlmN family. It depends on [4Fe-4S] cluster as a cofactor.

It is found in the cytoplasm. The enzyme catalyses adenosine(2503) in 23S rRNA + 2 reduced [2Fe-2S]-[ferredoxin] + 2 S-adenosyl-L-methionine = 2-methyladenosine(2503) in 23S rRNA + 5'-deoxyadenosine + L-methionine + 2 oxidized [2Fe-2S]-[ferredoxin] + S-adenosyl-L-homocysteine. The catalysed reaction is adenosine(37) in tRNA + 2 reduced [2Fe-2S]-[ferredoxin] + 2 S-adenosyl-L-methionine = 2-methyladenosine(37) in tRNA + 5'-deoxyadenosine + L-methionine + 2 oxidized [2Fe-2S]-[ferredoxin] + S-adenosyl-L-homocysteine. In terms of biological role, specifically methylates position 2 of adenine 2503 in 23S rRNA and position 2 of adenine 37 in tRNAs. m2A2503 modification seems to play a crucial role in the proofreading step occurring at the peptidyl transferase center and thus would serve to optimize ribosomal fidelity. The polypeptide is Dual-specificity RNA methyltransferase RlmN (Shewanella sp. (strain MR-4)).